The sequence spans 338 residues: 1-aminocyclopropane-1-carboxylate deaminase (338 aa).

Position 51 is an N6-(pyridoxal phosphate)lysine (lysine 51). Serine 78 acts as the Nucleophile in catalysis.

It belongs to the ACC deaminase/D-cysteine desulfhydrase family. As to quaternary structure, homotrimer. Pyridoxal 5'-phosphate serves as cofactor.

The catalysed reaction is 1-aminocyclopropane-1-carboxylate + H2O = 2-oxobutanoate + NH4(+). In terms of biological role, catalyzes a cyclopropane ring-opening reaction, the irreversible conversion of 1-aminocyclopropane-1-carboxylate (ACC) to ammonia and alpha-ketobutyrate. Allows growth on ACC as a nitrogen source. The protein is 1-aminocyclopropane-1-carboxylate deaminase of Variovorax paradoxus.